Here is a 459-residue protein sequence, read N- to C-terminus: Cysteine--tRNA ligase (459 aa).

Zn(2+) is bound at residue Cys28. A 'HIGH' region motif is present at residues 30-40 (ITIYDLCHIGH). Residues Cys209, His234, and Glu238 each coordinate Zn(2+). The 'KMSKS' region motif lies at 266–270 (KMSKS). An ATP-binding site is contributed by Lys269.

Belongs to the class-I aminoacyl-tRNA synthetase family. As to quaternary structure, monomer. Zn(2+) is required as a cofactor.

It is found in the cytoplasm. It carries out the reaction tRNA(Cys) + L-cysteine + ATP = L-cysteinyl-tRNA(Cys) + AMP + diphosphate. The chain is Cysteine--tRNA ligase from Shewanella woodyi (strain ATCC 51908 / MS32).